Consider the following 514-residue polypeptide: Arabinose import ATP-binding protein AraG (514 aa).

ABC transporter domains are found at residues 16–251 (LRFN…MVGR) and 251–507 (RDIQ…LPRH). 48–55 (GENGAGKS) contacts ATP.

The protein belongs to the ABC transporter superfamily. Arabinose importer (TC 3.A.1.2.2) family. As to quaternary structure, the complex is composed of two ATP-binding proteins (AraG), two transmembrane proteins (AraH) and a solute-binding protein (AraF).

It is found in the cell inner membrane. The catalysed reaction is L-arabinose(out) + ATP + H2O = L-arabinose(in) + ADP + phosphate + H(+). Part of the ABC transporter complex AraFGH involved in arabinose import. Responsible for energy coupling to the transport system. The protein is Arabinose import ATP-binding protein AraG of Pseudomonas fluorescens (strain Pf0-1).